A 158-amino-acid polypeptide reads, in one-letter code: MTLKTIEGTFIAPKGRYALVVGRFNSFVVESLVSGAVDALVRHGVAESEITIIRAPGAFEIPLVTQKVAQQGGFDAIIALGAVIRGGTPHFEYVAGECTKGLAQVSLQFGIPVAFGVLTVDSIEQAIERSGTKAGNKGAEAALSALEMVSLLAQLEAK.

5-amino-6-(D-ribitylamino)uracil is bound by residues Phe-24, 58–60 (AFE), and 82–84 (AVI). 87-88 (GT) contributes to the (2S)-2-hydroxy-3-oxobutyl phosphate binding site. Catalysis depends on His-90, which acts as the Proton donor. Phe-115 is a 5-amino-6-(D-ribitylamino)uracil binding site. Arg-129 contributes to the (2S)-2-hydroxy-3-oxobutyl phosphate binding site.

The protein belongs to the DMRL synthase family. As to quaternary structure, forms an icosahedral capsid composed of 60 subunits, arranged as a dodecamer of pentamers.

The enzyme catalyses (2S)-2-hydroxy-3-oxobutyl phosphate + 5-amino-6-(D-ribitylamino)uracil = 6,7-dimethyl-8-(1-D-ribityl)lumazine + phosphate + 2 H2O + H(+). The protein operates within cofactor biosynthesis; riboflavin biosynthesis; riboflavin from 2-hydroxy-3-oxobutyl phosphate and 5-amino-6-(D-ribitylamino)uracil: step 1/2. Catalyzes the formation of 6,7-dimethyl-8-ribityllumazine by condensation of 5-amino-6-(D-ribitylamino)uracil with 3,4-dihydroxy-2-butanone 4-phosphate. This is the penultimate step in the biosynthesis of riboflavin. The polypeptide is 6,7-dimethyl-8-ribityllumazine synthase (Pseudomonas paraeruginosa (strain DSM 24068 / PA7) (Pseudomonas aeruginosa (strain PA7))).